A 333-amino-acid polypeptide reads, in one-letter code: Torsin-1A (333 aa).

The N-terminal stretch at 1–20 (MKLGRAALALLLLAPCVVRA) is a signal peptide. The segment at 92 to 252 (KPKKPLTLSL…VSVFNNKNSG (161 aa)) is interaction with SNAPIN. An ATP-binding site is contributed by 103 to 110 (GWTGTGKN). N-linked (GlcNAc...) asparagine glycosylation is found at N144 and N159. Residues 252-333 (GFWHSSLIDR…FTKLDYYLDD (82 aa)) are interaction with KLC1. The segment at 313–333 (KVFSDKGCKTVFTKLDYYLDD) is interaction with SYNE3.

This sequence belongs to the ClpA/ClpB family. Torsin subfamily. In terms of assembly, homohexamer. Interacts with TOR1B; the interaction may be specific of neural tissues. Interacts (ATP-bound) with TOR1AIP1 and TOR1AIP2; the interactions induce ATPase activity. Interacts with KLHL14; preferentially when ATP-free. Interacts with KLC1 (via TPR repeats); the interaction associates TOR1A with the kinesin oligomeric complex. Interacts with COPS4; the interaction associates TOR1A with the CSN complex. Interacts with SNAPIN; the interaction is direct and associates SNAPIN with the CSN complex. Interacts with STON2. Interacts (ATP-bound) with SYNE3 (via KASH domain); the interaction is required for SYNE3 nuclear envelope localization. Interacts with VIM; the interaction associates TOR1A with the cytoskeleton. Interacts with PLEC. Interacts (ATP-bound) with SLC6A3; regulates SLC6A3 transport to the plasma membrane. N-glycosylated. Widely expressed (at protein level).

The protein localises to the endoplasmic reticulum lumen. It localises to the nucleus membrane. Its subcellular location is the cell projection. The protein resides in the growth cone. It is found in the cytoplasmic vesicle membrane. The protein localises to the synapse. It localises to the synaptosome. Its subcellular location is the cytoplasm. The protein resides in the cytoskeleton. It is found in the cytoplasmic vesicle. The protein localises to the secretory vesicle. It localises to the synaptic vesicle. It carries out the reaction ATP + H2O = ADP + phosphate + H(+). Protein with chaperone functions important for the control of protein folding, processing, stability and localization as well as for the reduction of misfolded protein aggregates. Involved in the regulation of synaptic vesicle recycling, controls STON2 protein stability in collaboration with the COP9 signalosome complex (CSN). In the nucleus, may link the cytoskeleton with the nuclear envelope, this mechanism seems to be crucial for the control of nuclear polarity, cell movement and, specifically in neurons, nuclear envelope integrity. Participates in the cellular trafficking and may regulate the subcellular location of multipass membrane proteins such as the dopamine transporter SLC6A3, leading to the modulation of dopamine neurotransmission. In the endoplasmic reticulum, plays a role in the quality control of protein folding by increasing clearance of misfolded proteins such as SGCE variants or holding them in an intermediate state for proper refolding. May have a redundant function with TOR1B in non-neural tissues. The chain is Torsin-1A (Tor1a) from Mus musculus (Mouse).